Reading from the N-terminus, the 199-residue chain is Securin (199 aa).

2 disordered regions span residues 1-23 (MATL…SKDG) and 58-108 (RKAL…DDAY). An N-acetylalanine modification is found at alanine 2. Over residues 7–23 (VDKDNEEPGSRLASKDG) the composition is skewed to basic and acidic residues. Residues 58 to 61 (RKAL) carry the D-box motif. The TEK-box 1 motif lies at 68–70 (TEK). Positions 76–85 (KPLQSKQPTL) are enriched in polar residues. The TEK-box 2 signature appears at 91–93 (TEK). Serine 162 carries the post-translational modification Phosphoserine. The SH3-binding motif lies at 179–192 (PPSALSALDVELPP).

It belongs to the securin family. Interacts with the caspase-like ESPL1, and prevents its protease activity by covering its active site. Interacts with p53/TP53 and blocks its activity probably by blocking its binding to DNA. Interacts with the Ku 70 kDa subunit of ds-DNA kinase. Interacts with PTTG1IP. Interacts with RPS10 and DNAJA1. Phosphorylated at Ser-162 by CDK1 during mitosis. Post-translationally, phosphorylated in vitro by ds-DNA kinase. In terms of processing, ubiquitinated through 'Lys-11' linkage of ubiquitin moieties by the anaphase promoting complex (APC) at the onset of anaphase, conducting to its degradation. 'Lys-11'-linked ubiquitination is mediated by the E2 ligase UBE2C/UBCH10. As to expression, expressed at low level in most tissues, except in adult testis, where it is highly expressed. Expressed in both spermatocytes and spermatids.

It is found in the cytoplasm. It localises to the nucleus. Regulatory protein, which plays a central role in chromosome stability, in the p53/TP53 pathway, and DNA repair. Probably acts by blocking the action of key proteins. During the mitosis, it blocks Separase/ESPL1 function, preventing the proteolysis of the cohesin complex and the subsequent segregation of the chromosomes. At the onset of anaphase, it is ubiquitinated, conducting to its destruction and to the liberation of ESPL1. Its function is however not limited to a blocking activity, since it is required to activate ESPL1. Negatively regulates the transcriptional activity and related apoptosis activity of p53/TP53. The negative regulation of p53/TP53 may explain the strong transforming capability of the protein when it is overexpressed. May also play a role in DNA repair via its interaction with Ku, possibly by connecting DNA damage-response pathways with sister chromatid separation. The protein is Securin (Pttg1) of Rattus norvegicus (Rat).